Here is a 157-residue protein sequence, read N- to C-terminus: Ribosome maturation factor RimP (157 aa).

It belongs to the RimP family.

It localises to the cytoplasm. Functionally, required for maturation of 30S ribosomal subunits. The sequence is that of Ribosome maturation factor RimP from Streptococcus thermophilus (strain ATCC BAA-491 / LMD-9).